We begin with the raw amino-acid sequence, 74 residues long: Small ribosomal subunit protein eS17 (74 aa).

It belongs to the eukaryotic ribosomal protein eS17 family.

This chain is Small ribosomal subunit protein eS17, found in Aeropyrum pernix (strain ATCC 700893 / DSM 11879 / JCM 9820 / NBRC 100138 / K1).